A 273-amino-acid polypeptide reads, in one-letter code: Cysteine protease S273R (273 aa).

Active-site residues include His-168 and Asn-187. A substrate-binding site is contributed by Gln-226. Residue Cys-232 is the Nucleophile of the active site.

It belongs to the peptidase C63 family.

It localises to the host cytoplasm. Its subcellular location is the virion. Cysteine protease that plays several role during infection including processing of the structural polyprotein or inhibition of the host immune response. Catalyzes the maturation of the pp220 and pp62 polyprotein precursors into core-shell proteins. Plays a role in the disruption of host pyroptosis via specific cleavage of gasdermin D/GSDMD. In addition, strongly decreases the host cGAS-STING signaling by targeting IKBKE via its enzymatic activity. Also impairs host FOXJ1-mediated antiviral effect via degradation of FOXJ1. Cleaves host G3BP1 inducing loss of stress granules formation. Interacts with and induces the degradation of host STAT2 via polyubiquitination of the latter. The protein is Cysteine protease S273R of Ornithodoros (relapsing fever ticks).